We begin with the raw amino-acid sequence, 359 residues long: Methylthioribose-1-phosphate isomerase (359 aa).

Substrate-binding positions include 50–52 (RGA), Arg93, and Gln200. Asp241 (proton donor) is an active-site residue. Residue 251–252 (NK) participates in substrate binding.

Belongs to the eIF-2B alpha/beta/delta subunits family. MtnA subfamily.

The enzyme catalyses 5-(methylsulfanyl)-alpha-D-ribose 1-phosphate = 5-(methylsulfanyl)-D-ribulose 1-phosphate. The protein operates within amino-acid biosynthesis; L-methionine biosynthesis via salvage pathway; L-methionine from S-methyl-5-thio-alpha-D-ribose 1-phosphate: step 1/6. Functionally, catalyzes the interconversion of methylthioribose-1-phosphate (MTR-1-P) into methylthioribulose-1-phosphate (MTRu-1-P). This is Methylthioribose-1-phosphate isomerase from Symbiobacterium thermophilum (strain DSM 24528 / JCM 14929 / IAM 14863 / T).